The primary structure comprises 389 residues: Succinate--CoA ligase [ADP-forming] subunit beta (389 aa).

Positions 9-244 constitute an ATP-grasp domain; sequence KQLLAEYGIP…KTQEDPTEVI (236 aa). Residues Lys46, 53–55, Gly102, and Glu107 contribute to the ATP site; that span reads GRG. Residues Asn199 and Asp213 each contribute to the Mg(2+) site. Residues Asn264 and 321–323 each bind substrate; that span reads GIV.

This sequence belongs to the succinate/malate CoA ligase beta subunit family. In terms of assembly, heterotetramer of two alpha and two beta subunits. Mg(2+) is required as a cofactor.

It catalyses the reaction succinate + ATP + CoA = succinyl-CoA + ADP + phosphate. The catalysed reaction is GTP + succinate + CoA = succinyl-CoA + GDP + phosphate. It functions in the pathway carbohydrate metabolism; tricarboxylic acid cycle; succinate from succinyl-CoA (ligase route): step 1/1. In terms of biological role, succinyl-CoA synthetase functions in the citric acid cycle (TCA), coupling the hydrolysis of succinyl-CoA to the synthesis of either ATP or GTP and thus represents the only step of substrate-level phosphorylation in the TCA. The beta subunit provides nucleotide specificity of the enzyme and binds the substrate succinate, while the binding sites for coenzyme A and phosphate are found in the alpha subunit. In Stenotrophomonas maltophilia (strain R551-3), this protein is Succinate--CoA ligase [ADP-forming] subunit beta.